Consider the following 1341-residue polypeptide: Pleckstrin homology domain-containing family G member 3 (1341 aa).

The disordered stretch occupies residues 1–68 (MPVSTALHQD…PNSNNNSSGW (68 aa)). Residues 18 to 29 (SLVSTTSSSGSS) show a composition bias toward low complexity. 2 stretches are compositionally biased toward polar residues: residues 42–51 (SEASAQNGTG) and 59–68 (PNSNNNSSGW). Ser76 carries the phosphoserine modification. One can recognise a DH domain in the interval 93–272 (YLGRVVREIV…TCVAWYINDM (180 aa)). The PH domain maps to 296 to 394 (DLTTYGELVL…WTHHIKRLIL (99 aa)). Ser433 and Ser502 each carry phosphoserine. A disordered region spans residues 433–482 (SQDEVSSHVRQGRRQSEPGHTLFSRATLPSRQQGFEMPGLKGRRKSEPTR). Disordered stretches follow at residues 508-657 (DFGQ…EFPE) and 684-715 (PEGSEDLKPLSSEEEEEEEMEAAQEPESLLPP). Acidic residues-rich tracts occupy residues 529–541 (ELEEEEELVEEEE) and 570–580 (GSEEEEEEEES). Phosphoserine is present on residues Ser571, Ser694, Ser695, Ser737, Ser759, Ser762, and Ser766. Residues 695 to 707 (SEEEEEEEMEAAQ) show a composition bias toward acidic residues. The interval 775 to 832 (SIGDSLSNPPTPEVIIGADMVTDNGPSVNGTESPSAGSGCPTEQDRSSCKKKESALST) is disordered. Positions 798 to 810 (NGPSVNGTESPSA) are enriched in polar residues. Positions 817–832 (EQDRSSCKKKESALST) are enriched in basic and acidic residues. 4 positions are modified to phosphoserine: Ser862, Ser899, Ser900, and Ser947. Disordered stretches follow at residues 876–930 (SRFN…EFCP), 939–958 (ERMESSERSPRTGSGQSQAN), 1071–1097 (KVTPDQEEQVPSISGLPEEAGELSGGK), and 1117–1162 (HGTS…PFDT). The span at 939 to 948 (ERMESSERSP) shows a compositional bias: basic and acidic residues. The segment covering 949–958 (RTGSGQSQAN) has biased composition (polar residues). A phosphoserine mark is found at Ser1129, Ser1134, Ser1136, Ser1141, Ser1155, Ser1158, and Ser1201. A compositionally biased stretch (polar residues) spans 1135–1162 (FSPSAVSPRTTSPGARSSARSPLSPFDT). 2 disordered regions span residues 1204–1249 (ENIV…LNGG) and 1271–1341 (KGPH…NSVG). Residues 1309-1320 (QPKEHGPRDSAD) show a composition bias toward basic and acidic residues.

It localises to the cytoplasm. Its subcellular location is the cytoskeleton. Its function is as follows. Plays a role in controlling cell polarity and cell motility by selectively binding newly polymerized actin and activating RAC1 and CDC42 to enhance local actin polymerization. This is Pleckstrin homology domain-containing family G member 3 from Mus musculus (Mouse).